The sequence spans 131 residues: Fumarate reductase subunit C (131 aa).

Helical transmembrane passes span Glu30–Leu50, Ile61–Leu81, and Ile110–Phe130.

Belongs to the FrdC family. In terms of assembly, part of an enzyme complex containing four subunits: a flavoprotein (FrdA), an iron-sulfur protein (FrdB), and two hydrophobic anchor proteins (FrdC and FrdD).

The protein resides in the cell inner membrane. In terms of biological role, two distinct, membrane-bound, FAD-containing enzymes are responsible for the catalysis of fumarate and succinate interconversion; fumarate reductase is used in anaerobic growth, and succinate dehydrogenase is used in aerobic growth. Anchors the catalytic components of the fumarate reductase complex to the cell inner membrane, binds quinones. This is Fumarate reductase subunit C from Klebsiella pneumoniae subsp. pneumoniae (strain ATCC 700721 / MGH 78578).